The primary structure comprises 250 residues: HLA class II histocompatibility antigen, DO alpha chain (250 aa).

The first 25 residues, 1–25 (MALRAGLVLGFHTLMTLLSPQEAGA), serve as a signal peptide directing secretion. An alpha-1 region spans residues 26–110 (TKADHMGSYG…ERSNRSRAIN (85 aa)). Over 26–217 (TKADHMGSYG…VPIPPPDAME (192 aa)) the chain is Extracellular. Asn104 and Asn144 each carry an N-linked (GlcNAc...) asparagine glycan. The segment at 111–204 (VPPRVTVLPK…GLDAPLLRHW (94 aa)) is alpha-2. The 93-residue stretch at 113 to 205 (PRVTVLPKSR…LDAPLLRHWE (93 aa)) folds into the Ig-like C1-type domain. Cys133 and Cys189 form a disulfide bridge. The tract at residues 205 to 217 (ELQVPIPPPDAME) is connecting peptide. A helical membrane pass occupies residues 218–240 (TLVCALGLAIGLVGFLVGTVLII). Over 241–250 (MGTYVSSVPR) the chain is Cytoplasmic.

It belongs to the MHC class II family. In terms of assembly, heterodimer of an alpha chain (DOA) and a beta chain (DOB). Forms a heterotetrameric complex with an HLA-DM molecule during intracellular transport in endosomal/lysosomal compartments in B-cells.

The protein resides in the endosome membrane. The protein localises to the lysosome membrane. Functionally, important modulator in the HLA class II restricted antigen presentation pathway by interaction with the HLA-DM molecule in B-cells. Modifies peptide exchange activity of HLA-DM. This chain is HLA class II histocompatibility antigen, DO alpha chain (HLA-DOA), found in Homo sapiens (Human).